We begin with the raw amino-acid sequence, 114 residues long: MEIVNKQSFQDVLEYVRMYRLKNRIKRDMEDNNRKIRDNQKRILLLDNLNQYIRDDMTIAEVRGIIESMRDDYESRVDDYTIRNAELSKQRREASTKMKEQKKAHAELLKNAEK.

Residues 70–111 adopt a coiled-coil conformation; it reads RDDYESRVDDYTIRNAELSKQRREASTKMKEQKKAHAELLKN. A disordered region spans residues 89–114; the sequence is KQRREASTKMKEQKKAHAELLKNAEK.

It belongs to the pole-localizer TmaR family.

It is found in the cytoplasm. Pole-localizer protein involved in the regulation of several cellular processes. The protein is Pole-localizer protein TmaR of Haemophilus influenzae (strain PittEE).